A 260-amino-acid polypeptide reads, in one-letter code: HMP-PP phosphatase (260 aa).

The Nucleophile role is filled by D8. Mg(2+) contacts are provided by D8, D10, and D212.

It belongs to the HAD-like hydrolase superfamily. Cof family. The cofactor is Mg(2+).

The catalysed reaction is 4-amino-2-methyl-5-(diphosphooxymethyl)pyrimidine + H2O = 4-amino-2-methyl-5-(phosphooxymethyl)pyrimidine + phosphate + H(+). In terms of biological role, catalyzes the hydrolysis of 4-amino-2-methyl-5-hydroxymethylpyrimidine pyrophosphate (HMP-PP) to 4-amino-2-methyl-5-hydroxymethylpyrimidine phosphate (HMP-P). The chain is HMP-PP phosphatase from Shigella boydii serotype 4 (strain Sb227).